Here is a 147-residue protein sequence, read N- to C-terminus: Protein phosphatase 1 regulatory subunit 14B (147 aa).

Positions 1 to 15 are enriched in low complexity; the sequence is MADSGPAGGAALAAP. The interval 1–55 is disordered; sequence MADSGPAGGAALAAPAPGPGSGGAGPRVYFQSPPGAAGEGPGGADDEGPVRRQGK. The residue at position 2 (Ala-2) is an N-acetylalanine. Position 21 is a phosphoserine (Ser-21). A Phosphotyrosine modification is found at Tyr-29. A Phosphoserine modification is found at Ser-32. Thr-57 carries the post-translational modification Phosphothreonine. Residues 61–103 adopt a coiled-coil conformation; the sequence is DRKELRKRLNLEEWILEQLTRLYDCQEEEIPELEIDVDELLDM.

Belongs to the PP1 inhibitor family. Post-translationally, phosphorylated primarily on Thr-57 by PKC (in vitro). An unknown Ser is also phosphorylated by PKC (in vitro).

It is found in the cytoplasm. In terms of biological role, inhibitor of PPP1CA. Has over 50-fold higher inhibitory activity when phosphorylated. This is Protein phosphatase 1 regulatory subunit 14B (PPP1R14B) from Sus scrofa (Pig).